The sequence spans 308 residues: Homoserine kinase (308 aa).

Residue 95-105 participates in ATP binding; it reads PQSRGLGSSAA.

The protein belongs to the GHMP kinase family. Homoserine kinase subfamily.

The protein localises to the cytoplasm. It catalyses the reaction L-homoserine + ATP = O-phospho-L-homoserine + ADP + H(+). It functions in the pathway amino-acid biosynthesis; L-threonine biosynthesis; L-threonine from L-aspartate: step 4/5. Its function is as follows. Catalyzes the ATP-dependent phosphorylation of L-homoserine to L-homoserine phosphate. The polypeptide is Homoserine kinase (Corynebacterium jeikeium (strain K411)).